A 104-amino-acid chain; its full sequence is Pyrimidine/purine nucleoside phosphorylase (104 aa).

Belongs to the nucleoside phosphorylase PpnP family.

It catalyses the reaction a purine D-ribonucleoside + phosphate = a purine nucleobase + alpha-D-ribose 1-phosphate. It carries out the reaction adenosine + phosphate = alpha-D-ribose 1-phosphate + adenine. The catalysed reaction is cytidine + phosphate = cytosine + alpha-D-ribose 1-phosphate. The enzyme catalyses guanosine + phosphate = alpha-D-ribose 1-phosphate + guanine. It catalyses the reaction inosine + phosphate = alpha-D-ribose 1-phosphate + hypoxanthine. It carries out the reaction thymidine + phosphate = 2-deoxy-alpha-D-ribose 1-phosphate + thymine. The catalysed reaction is uridine + phosphate = alpha-D-ribose 1-phosphate + uracil. The enzyme catalyses xanthosine + phosphate = alpha-D-ribose 1-phosphate + xanthine. Its function is as follows. Catalyzes the phosphorolysis of diverse nucleosides, yielding D-ribose 1-phosphate and the respective free bases. Can use uridine, adenosine, guanosine, cytidine, thymidine, inosine and xanthosine as substrates. Also catalyzes the reverse reactions. This is Pyrimidine/purine nucleoside phosphorylase from Geotalea daltonii (strain DSM 22248 / JCM 15807 / FRC-32) (Geobacter daltonii).